Consider the following 1057-residue polypeptide: Carbamoyl phosphate synthase large chain (1057 aa).

Positions 1-401 are carboxyphosphate synthetic domain; that stretch reads MPKNKDINTI…SLLKAIRSLE (401 aa). 12 residues coordinate ATP: arginine 129, arginine 169, glycine 175, glycine 176, lysine 208, isoleucine 210, glutamate 215, glycine 241, isoleucine 242, histidine 243, glutamine 284, and glutamate 298. The region spanning 133-327 is the ATP-grasp 1 domain; the sequence is RSLMNELDVP…IAKLAAKIAV (195 aa). Mg(2+) is bound by residues glutamine 284, glutamate 298, and asparagine 300. The Mn(2+) site is built by glutamine 284, glutamate 298, and asparagine 300. The oligomerization domain stretch occupies residues 402-546; that stretch reads YGVHHLGLPN…YGTYERDNES (145 aa). The segment at 547–929 is carbamoyl phosphate synthetic domain; the sequence is VVTDKEKVIV…ALFKGLTASG (383 aa). In terms of domain architecture, ATP-grasp 2 spans 671-861; the sequence is EALLNKIDVP…MAQLAMRAIL (191 aa). ATP-binding residues include arginine 707, arginine 746, leucine 748, glutamate 752, glycine 777, valine 778, histidine 779, serine 780, glutamine 820, and glutamate 832. Glutamine 820, glutamate 832, and asparagine 834 together coordinate Mg(2+). Glutamine 820, glutamate 832, and asparagine 834 together coordinate Mn(2+). Positions 930–1057 constitute an MGS-like domain; the sequence is VEVKDHGTVL…ESMSFTMKQM (128 aa). The allosteric domain stretch occupies residues 930–1057; it reads VEVKDHGTVL…ESMSFTMKQM (128 aa).

The protein belongs to the CarB family. In terms of assembly, composed of two chains; the small (or glutamine) chain promotes the hydrolysis of glutamine to ammonia, which is used by the large (or ammonia) chain to synthesize carbamoyl phosphate. Tetramer of heterodimers (alpha,beta)4. Mg(2+) serves as cofactor. It depends on Mn(2+) as a cofactor.

The enzyme catalyses hydrogencarbonate + L-glutamine + 2 ATP + H2O = carbamoyl phosphate + L-glutamate + 2 ADP + phosphate + 2 H(+). It catalyses the reaction hydrogencarbonate + NH4(+) + 2 ATP = carbamoyl phosphate + 2 ADP + phosphate + 2 H(+). Its pathway is amino-acid biosynthesis; L-arginine biosynthesis; carbamoyl phosphate from bicarbonate: step 1/1. It functions in the pathway pyrimidine metabolism; UMP biosynthesis via de novo pathway; (S)-dihydroorotate from bicarbonate: step 1/3. Its function is as follows. Large subunit of the glutamine-dependent carbamoyl phosphate synthetase (CPSase). CPSase catalyzes the formation of carbamoyl phosphate from the ammonia moiety of glutamine, carbonate, and phosphate donated by ATP, constituting the first step of 2 biosynthetic pathways, one leading to arginine and/or urea and the other to pyrimidine nucleotides. The large subunit (synthetase) binds the substrates ammonia (free or transferred from glutamine from the small subunit), hydrogencarbonate and ATP and carries out an ATP-coupled ligase reaction, activating hydrogencarbonate by forming carboxy phosphate which reacts with ammonia to form carbamoyl phosphate. This Staphylococcus carnosus (strain TM300) protein is Carbamoyl phosphate synthase large chain.